A 230-amino-acid polypeptide reads, in one-letter code: Large ribosomal subunit protein uL3 (230 aa).

2 disordered regions span residues 125–149 (QAIG…SLGD) and 210–230 (PNPK…VKNE).

The protein belongs to the universal ribosomal protein uL3 family. Part of the 50S ribosomal subunit. Forms a cluster with proteins L14 and L19.

In terms of biological role, one of the primary rRNA binding proteins, it binds directly near the 3'-end of the 23S rRNA, where it nucleates assembly of the 50S subunit. The chain is Large ribosomal subunit protein uL3 from Mesomycoplasma hyopneumoniae (strain J / ATCC 25934 / NCTC 10110) (Mycoplasma hyopneumoniae).